A 477-amino-acid polypeptide reads, in one-letter code: Glycogen synthase 1 (477 aa).

Lysine 15 contributes to the ADP-alpha-D-glucose binding site.

It belongs to the glycosyltransferase 1 family. Bacterial/plant glycogen synthase subfamily.

It carries out the reaction [(1-&gt;4)-alpha-D-glucosyl](n) + ADP-alpha-D-glucose = [(1-&gt;4)-alpha-D-glucosyl](n+1) + ADP + H(+). It functions in the pathway glycan biosynthesis; glycogen biosynthesis. Its function is as follows. Synthesizes alpha-1,4-glucan chains using ADP-glucose. The polypeptide is Glycogen synthase 1 (glgA1) (Synechocystis sp. (strain ATCC 27184 / PCC 6803 / Kazusa)).